Reading from the N-terminus, the 854-residue chain is Gamma-secretase-activating protein (854 aa).

This sequence belongs to the GSAP family. In terms of assembly, interacts with APP; specifically interacts with the CTF-alpha product of APP. Interacts with the gamma-secretase complex. The protein is first synthesized as a holoprotein form of 98 kDa and rapidly processed into the gamma-secretase-activating protein 16 kDa C-terminal form, which constitutes the predominant form. Widely expressed.

The protein resides in the golgi apparatus. The protein localises to the trans-Golgi network. Functionally, regulator of gamma-secretase activity, which specifically activates the production of amyloid-beta protein (amyloid-beta protein 40 and amyloid-beta protein 42), without affecting the cleavage of other gamma-secretase targets such has Notch. The gamma-secretase complex is an endoprotease complex that catalyzes the intramembrane cleavage of integral membrane proteins such as Notch receptors and APP (amyloid-beta precursor protein). Specifically promotes the gamma-cleavage of APP CTF-alpha (also named APP-CTF) by the gamma-secretase complex to generate amyloid-beta, while it reduces the epsilon-cleavage of APP CTF-alpha, leading to a low production of AICD. This is Gamma-secretase-activating protein (GSAP) from Homo sapiens (Human).